Consider the following 130-residue polypeptide: S-adenosylmethionine decarboxylase proenzyme (130 aa).

Ser64 (schiff-base intermediate with substrate; via pyruvic acid) is an active-site residue. Position 64 is a pyruvic acid (Ser); by autocatalysis (Ser64). His69 acts as the Proton acceptor; for processing activity in catalysis. The active-site Proton donor; for catalytic activity is the Cys84.

The protein belongs to the prokaryotic AdoMetDC family. Type 1 subfamily. In terms of assembly, heterotetramer of two alpha and two beta chains arranged as a dimer of alpha/beta heterodimers. The cofactor is pyruvate. Post-translationally, is synthesized initially as an inactive proenzyme. Formation of the active enzyme involves a self-maturation process in which the active site pyruvoyl group is generated from an internal serine residue via an autocatalytic post-translational modification. Two non-identical subunits are generated from the proenzyme in this reaction, and the pyruvate is formed at the N-terminus of the alpha chain, which is derived from the carboxyl end of the proenzyme. The post-translation cleavage follows an unusual pathway, termed non-hydrolytic serinolysis, in which the side chain hydroxyl group of the serine supplies its oxygen atom to form the C-terminus of the beta chain, while the remainder of the serine residue undergoes an oxidative deamination to produce ammonia and the pyruvoyl group blocking the N-terminus of the alpha chain.

It carries out the reaction S-adenosyl-L-methionine + H(+) = S-adenosyl 3-(methylsulfanyl)propylamine + CO2. It participates in amine and polyamine biosynthesis; S-adenosylmethioninamine biosynthesis; S-adenosylmethioninamine from S-adenosyl-L-methionine: step 1/1. Functionally, catalyzes the decarboxylation of S-adenosylmethionine to S-adenosylmethioninamine (dcAdoMet), the propylamine donor required for the synthesis of the polyamines spermine and spermidine from the diamine putrescine. This Thermoplasma volcanium (strain ATCC 51530 / DSM 4299 / JCM 9571 / NBRC 15438 / GSS1) protein is S-adenosylmethionine decarboxylase proenzyme.